Consider the following 203-residue polypeptide: uncharacterized protein (203 aa).

The interval 117–138 (SSDPKLKQPSNCLNDQTNNDSA) is disordered. A compositionally biased stretch (polar residues) spans 124-138 (QPSNCLNDQTNNDSA).

Its subcellular location is the cytoplasm. The protein localises to the nucleus. This is an uncharacterized protein from Schizosaccharomyces pombe (strain 972 / ATCC 24843) (Fission yeast).